A 673-amino-acid chain; its full sequence is tRNA uridine 5-carboxymethylaminomethyl modification enzyme MnmG (673 aa).

17–22 (GGGHAG) provides a ligand contact to FAD. Position 284–298 (284–298 (GPRYCPSVEDKINRF)) interacts with NAD(+).

Belongs to the MnmG family. Homodimer. Heterotetramer of two MnmE and two MnmG subunits. The cofactor is FAD.

Its subcellular location is the cytoplasm. NAD-binding protein involved in the addition of a carboxymethylaminomethyl (cmnm) group at the wobble position (U34) of certain tRNAs, forming tRNA-cmnm(5)s(2)U34. The protein is tRNA uridine 5-carboxymethylaminomethyl modification enzyme MnmG of Polaromonas sp. (strain JS666 / ATCC BAA-500).